A 607-amino-acid chain; its full sequence is Zinc finger CCCH domain-containing protein 66 (607 aa).

2 ANK repeats span residues 57–87 (EERTPLMIAALFGSKEVVDYIISTGLVDVNR) and 92–124 (DGATALHCAVSGLSANSLEIVTLLLKGSANPDS). Acidic residues predominate over residues 161-178 (LNEVNGQEESEPEVEVEV). The segment at 161–193 (LNEVNGQEESEPEVEVEVEVSPPRGSERKEYPV) is disordered. 2 C3H1-type zinc fingers span residues 254–276 (PCPEFRKGSCSRGDTCEYAHGIF) and 284–308 (QYRTRLCKDETNCSRRVCFFAHKPE). The segment at 342–363 (ISPLPIGATTTPPLSPNGVSSP) is disordered. Polar residues predominate over residues 349 to 361 (ATTTPPLSPNGVS).

In Arabidopsis thaliana (Mouse-ear cress), this protein is Zinc finger CCCH domain-containing protein 66.